Consider the following 107-residue polypeptide: Multidrug resistance protein mmr (107 aa).

The next 4 membrane-spanning stretches (helical) occupy residues 2-19 (TYLF…ATSL), 29-51 (LWPT…VSIS), 58-80 (VAYA…LFLG), and 84-106 (SVTK…LTGA).

It belongs to the drug/metabolite transporter (DMT) superfamily. Small multidrug resistance (SMR) (TC 2.A.7.1) family. Mmr subfamily.

It localises to the cell membrane. Its function is as follows. Multidrug efflux pump. Confers resistance to tetraphenylphosphonium (TPP), erythromycin, ethidium bromide, acriflavine, safranin O and pyronin Y. The chain is Multidrug resistance protein mmr (mmr) from Mycolicibacterium paratuberculosis (strain ATCC BAA-968 / K-10) (Mycobacterium paratuberculosis).